Reading from the N-terminus, the 671-residue chain is MNNNQCMRKKLDELRNIARSYNISITGKKKQQLCDEIIDYQKNNPPRRSPSPRRSPSPRRISPECEQWLANKGINPRTGKAIKIGGPTYKKLEMECKEASPKIPSPVRQPSPVHSPVRSPVRQPSPVRFVEKTKGALNKMKKDQLIDFAQSLGLNPGKLLKPALVDLIFVNQKPPRRSPSPRRSPSPRRSPSPRRSPSPRPVFVEKTKGALNKMKKDQLIDLAQSLGLNPGKLLKPALVDLIFVNQKPVEPIRASSSSRSSRSTRRSSSTKPSRRSSSRSRRSSSRSRRSSSRSRRSSSRSRRSSRRSTSRSRSLSKRSIRNISTVGDLEDLVASNLPIAIPESLSRSLSPSRTDFHEAEIELGSDFDLNNLPENRIAELKQLNVLAKQNGFRMINVPLDGNCMFSVIGRAFNTSSSVIRQHTVDYLRRCKGSFDHIPANIDDPTINWNDYIDRLEEDACWGDNTALFAASLALNFQAHILQVAGGDEGSWIRFGVNETNMGRIVNMGYLDNFHYIALEPFSGRLDILSIPSTHSKCPPPEISNRRDEEIRRDEEVEDEVIGERIVREAEVIERELRQEEELTSIVSTKRSLRPSIPPKISTEHRRTPKLRPSVPRPSSIRQSQPNVAALARLETLTKIKDIIDALQRPLENKLSTLTNTEKAIMQCIGVA.

Disordered regions lie at residues 36–62 (EIID…RRIS), 100–123 (SPKI…PVRQ), 171–203 (NQKP…RPVF), and 250–319 (EPIR…SKRS). Residues 110–123 (PSPVHSPVRSPVRQ) show a composition bias toward low complexity. Over residues 182–200 (RRSPSPRRSPSPRRSPSPR) the composition is skewed to pro residues. Low complexity predominate over residues 255 to 271 (SSSSRSSRSTRRSSSTK). Positions 272-319 (PSRRSSSRSRRSSSRSRRSSSRSRRSSSRSRRSSRRSTSRSRSLSKRS) are enriched in basic residues. The 130-residue stretch at 392–521 (FRMINVPLDG…NFHYIALEPF (130 aa)) folds into the OTU domain. Asp400 is an active-site residue. The active-site Nucleophile is the Cys403. His514 is an active-site residue. The disordered stretch occupies residues 589 to 625 (KRSLRPSIPPKISTEHRRTPKLRPSVPRPSSIRQSQP).

It catalyses the reaction Thiol-dependent hydrolysis of ester, thioester, amide, peptide and isopeptide bonds formed by the C-terminal Gly of ubiquitin (a 76-residue protein attached to proteins as an intracellular targeting signal).. Functionally, hydrolase that can remove conjugated ubiquitin from proteins and may therefore play an important regulatory role at the level of protein turnover by preventing degradation. The sequence is that of Putative ubiquitin thioesterase 232R from Acheta domesticus (House cricket).